We begin with the raw amino-acid sequence, 235 residues long: Phosphoribosylformylglycinamidine synthase subunit PurQ (235 aa).

The 231-residue stretch at 5–235 (FGVVVFPGSN…LLNHVSIVAA (231 aa)) folds into the Glutamine amidotransferase type-1 domain. The Nucleophile role is filled by Cys-88. Active-site residues include His-205 and Glu-207.

Part of the FGAM synthase complex composed of 1 PurL, 1 PurQ and 2 PurS subunits.

The protein resides in the cytoplasm. It catalyses the reaction N(2)-formyl-N(1)-(5-phospho-beta-D-ribosyl)glycinamide + L-glutamine + ATP + H2O = 2-formamido-N(1)-(5-O-phospho-beta-D-ribosyl)acetamidine + L-glutamate + ADP + phosphate + H(+). It carries out the reaction L-glutamine + H2O = L-glutamate + NH4(+). Its pathway is purine metabolism; IMP biosynthesis via de novo pathway; 5-amino-1-(5-phospho-D-ribosyl)imidazole from N(2)-formyl-N(1)-(5-phospho-D-ribosyl)glycinamide: step 1/2. Functionally, part of the phosphoribosylformylglycinamidine synthase complex involved in the purines biosynthetic pathway. Catalyzes the ATP-dependent conversion of formylglycinamide ribonucleotide (FGAR) and glutamine to yield formylglycinamidine ribonucleotide (FGAM) and glutamate. The FGAM synthase complex is composed of three subunits. PurQ produces an ammonia molecule by converting glutamine to glutamate. PurL transfers the ammonia molecule to FGAR to form FGAM in an ATP-dependent manner. PurS interacts with PurQ and PurL and is thought to assist in the transfer of the ammonia molecule from PurQ to PurL. The polypeptide is Phosphoribosylformylglycinamidine synthase subunit PurQ (Salinibacter ruber (strain DSM 13855 / M31)).